Reading from the N-terminus, the 38-residue chain is Large ribosomal subunit protein bL36 (38 aa).

Belongs to the bacterial ribosomal protein bL36 family.

The protein is Large ribosomal subunit protein bL36 of Stutzerimonas stutzeri (strain A1501) (Pseudomonas stutzeri).